The following is a 396-amino-acid chain: Putative glutamate--cysteine ligase 2-2 (396 aa).

The protein belongs to the glutamate--cysteine ligase type 2 family. YbdK subfamily.

The catalysed reaction is L-cysteine + L-glutamate + ATP = gamma-L-glutamyl-L-cysteine + ADP + phosphate + H(+). ATP-dependent carboxylate-amine ligase which exhibits weak glutamate--cysteine ligase activity. This is Putative glutamate--cysteine ligase 2-2 from Mycolicibacterium smegmatis (strain ATCC 700084 / mc(2)155) (Mycobacterium smegmatis).